Reading from the N-terminus, the 294-residue chain is Non-selective voltage-gated ion channel VDAC2 (294 aa).

Position 2 is an N-acetylalanine (Ala-2). ATP-binding residues include Lys-23 and Lys-31. Lys-31 is modified (N6-acetyllysine; alternate). Lys-31 is subject to N6-succinyllysine; alternate. Lys-31 is covalently cross-linked (Glycyl lysine isopeptide (Lys-Gly) (interchain with G-Cter in ubiquitin); alternate). The next 2 beta stranded transmembrane spans lie at 37-46 (LVKLDVKTKS) and 50-58 (VEFSTSGSS). A Glycyl lysine isopeptide (Lys-Gly) (interchain with G-Cter in ubiquitin) cross-link involves residue Lys-64. Residues 65–75 (VTGTLETKYKW) traverse the membrane as a beta stranded segment. Residue Tyr-78 is modified to Phosphotyrosine. 3 beta stranded membrane passes run 80–87 (LTFTEKWN), 91–100 (TLGTEIAIED), and 106–115 (LKLTFDTTFS). Position 118 is a phosphothreonine (Thr-118). Residue Lys-120 is modified to N6-acetyllysine; alternate. A Glycyl lysine isopeptide (Lys-Gly) (interchain with G-Cter in ubiquitin); alternate cross-link involves residue Lys-120. A Glycyl lysine isopeptide (Lys-Gly) (interchain with G-Cter in ubiquitin) cross-link involves residue Lys-121. 4 consecutive transmembrane segments (beta stranded) span residues 122–131 (SGKIKSSYKR), 134–141 (INLGCDVD), 148–156 (AIHGSAVFG), and 161–169 (LAGYQMTFD). Residue Lys-172 forms a Glycyl lysine isopeptide (Lys-Gly) (interchain with G-Cter in ubiquitin) linkage. The next 6 beta stranded transmembrane spans lie at 174–186 (KLTRNNFAVGYRT), 189–196 (FQLHTNVN), 200–209 (EFGGSIYQKV), 213–222 (LDTSVNLAWT), 229–238 (RFGIAAKYQL), and 242–249 (ASISAKVN). Ser-251 is subject to Phosphoserine. Residues 253–255 (LIG) and 271–275 (SALVD) contribute to the NAD(+) site. 2 beta stranded membrane-spanning segments follow: residues 253 to 262 (LIGVGYTQTL) and 265 to 274 (GVKLTLSALV). Position 277 is an N6-acetyllysine; alternate (Lys-277). Residue Lys-277 forms a Glycyl lysine isopeptide (Lys-Gly) (interchain with G-Cter in ubiquitin); alternate linkage. A beta stranded transmembrane segment spans residues 284 to 293 (HKLGLALELE).

The protein belongs to the eukaryotic mitochondrial porin family. As to quaternary structure, monomer, homodimer and higher order oligomers; formation of higher order structures is necessary for scramblase activity. Interacts with ARMC12 in a TBC1D21-dependent manner. Interacts with KLC3. Interacts with SPATA33. Interacts with PPP3CC in a SPATA33-dependent manner. Post-translationally, ubiquitinated by PRKN during mitophagy, leading to its degradation and enhancement of mitophagy. Deubiquitinated by USP30.

The protein resides in the mitochondrion outer membrane. Its subcellular location is the membrane. The enzyme catalyses chloride(in) = chloride(out). It catalyses the reaction K(+)(in) = K(+)(out). It carries out the reaction a 1,2-diacyl-sn-glycero-3-phospho-L-serine(in) = a 1,2-diacyl-sn-glycero-3-phospho-L-serine(out). The catalysed reaction is a 1,2-diacyl-sn-glycero-3-phosphocholine(in) = a 1,2-diacyl-sn-glycero-3-phosphocholine(out). The enzyme catalyses a 1,2-diacyl-sn-glycero-3-phospho-(1D-myo-inositol)(in) = a 1,2-diacyl-sn-glycero-3-phospho-(1D-myo-inositol)(out). Its function is as follows. Non-selective voltage-gated ion channel that mediates the transport of anions and cations through the mitochondrion outer membrane and plasma membrane. The channel adopts an open conformation at zero mV and a closed conformation at both positive and negative potentials. There are two populations of channels; the main that functions in a lower open-state conductance with lower ion selectivity, that switch, in a voltage-dependent manner, from the open to a low-conducting 'closed' state and the other that has a normal ion selectivity in the typical high conductance, 'open' state. Binds various lipids, including the sphingolipid ceramide, the phospholipid phosphatidylcholine, and the sterols cholesterol and oxysterol. Binding of ceramide promotes the mitochondrial outer membrane permeabilization (MOMP) apoptotic pathway. Functionally, catalyzes the scrambling of phospholipids across the outer mitochondrial membrane; the mechanism is unrelated to channel activity and is capable of translocating both anionic and zwitterionic phospholipids. The polypeptide is Non-selective voltage-gated ion channel VDAC2 (Oryctolagus cuniculus (Rabbit)).